Here is a 325-residue protein sequence, read N- to C-terminus: Biotin synthase (325 aa).

The Radical SAM core domain occupies 36-254 (NEVQLAMLLS…IALARIMFPK (219 aa)). The [4Fe-4S] cluster site is built by cysteine 51, cysteine 55, and cysteine 58. Cysteine 95, cysteine 126, cysteine 186, and arginine 258 together coordinate [2Fe-2S] cluster.

It belongs to the radical SAM superfamily. Biotin synthase family. Homodimer. Requires [4Fe-4S] cluster as cofactor. It depends on [2Fe-2S] cluster as a cofactor.

It carries out the reaction (4R,5S)-dethiobiotin + (sulfur carrier)-SH + 2 reduced [2Fe-2S]-[ferredoxin] + 2 S-adenosyl-L-methionine = (sulfur carrier)-H + biotin + 2 5'-deoxyadenosine + 2 L-methionine + 2 oxidized [2Fe-2S]-[ferredoxin]. It participates in cofactor biosynthesis; biotin biosynthesis; biotin from 7,8-diaminononanoate: step 2/2. Functionally, catalyzes the conversion of dethiobiotin (DTB) to biotin by the insertion of a sulfur atom into dethiobiotin via a radical-based mechanism. The sequence is that of Biotin synthase from Neorickettsia sennetsu (strain ATCC VR-367 / Miyayama) (Ehrlichia sennetsu).